The following is a 466-amino-acid chain: Ribulose bisphosphate carboxylase large chain (466 aa).

At Lys5 the chain carries N6,N6,N6-trimethyllysine. Substrate-binding residues include Asn114 and Thr164. Residue Lys166 is the Proton acceptor of the active site. Lys168 serves as a coordination point for substrate. The Mg(2+) site is built by Lys192, Asp194, and Glu195. Position 192 is an N6-carboxylysine (Lys192). His285 serves as the catalytic Proton acceptor. Arg286, His318, and Ser370 together coordinate substrate.

The protein belongs to the RuBisCO large chain family. Type I subfamily. As to quaternary structure, heterohexadecamer of 8 large chains and 8 small chains; disulfide-linked. The disulfide link is formed within the large subunit homodimers. The cofactor is Mg(2+). In terms of processing, the disulfide bond which can form in the large chain dimeric partners within the hexadecamer appears to be associated with oxidative stress and protein turnover.

Its subcellular location is the plastid. It localises to the chloroplast. The catalysed reaction is 2 (2R)-3-phosphoglycerate + 2 H(+) = D-ribulose 1,5-bisphosphate + CO2 + H2O. It catalyses the reaction D-ribulose 1,5-bisphosphate + O2 = 2-phosphoglycolate + (2R)-3-phosphoglycerate + 2 H(+). Its function is as follows. RuBisCO catalyzes two reactions: the carboxylation of D-ribulose 1,5-bisphosphate, the primary event in carbon dioxide fixation, as well as the oxidative fragmentation of the pentose substrate in the photorespiration process. Both reactions occur simultaneously and in competition at the same active site. This chain is Ribulose bisphosphate carboxylase large chain, found in Saururus cernuus (Lizard's tail).